A 455-amino-acid chain; its full sequence is Tubby-like F-box protein 1 (455 aa).

Positions 54–112 (ETPWANLPPELLRDVIKRLEESESVWPARRHVVACASVCRSWRDMCKEIVQSPELSGKI) constitute an F-box domain. A disordered region spans residues 386–414 (QPQPQPQPQPQPQPLTQPQPSGQTDGPDK). Pro residues predominate over residues 388 to 402 (QPQPQPQPQPQPLTQ).

This sequence belongs to the TUB family. As to expression, ubiquitous.

In Arabidopsis thaliana (Mouse-ear cress), this protein is Tubby-like F-box protein 1.